The primary structure comprises 197 residues: ATP-dependent Clp protease proteolytic subunit 1 (197 aa).

S99 acts as the Nucleophile in catalysis. H124 is a catalytic residue.

This sequence belongs to the peptidase S14 family. In terms of assembly, fourteen ClpP subunits assemble into 2 heptameric rings which stack back to back to give a disk-like structure with a central cavity, resembling the structure of eukaryotic proteasomes.

Its subcellular location is the cytoplasm. The enzyme catalyses Hydrolysis of proteins to small peptides in the presence of ATP and magnesium. alpha-casein is the usual test substrate. In the absence of ATP, only oligopeptides shorter than five residues are hydrolyzed (such as succinyl-Leu-Tyr-|-NHMec, and Leu-Tyr-Leu-|-Tyr-Trp, in which cleavage of the -Tyr-|-Leu- and -Tyr-|-Trp bonds also occurs).. Its function is as follows. Cleaves peptides in various proteins in a process that requires ATP hydrolysis. Has a chymotrypsin-like activity. Plays a major role in the degradation of misfolded proteins. The polypeptide is ATP-dependent Clp protease proteolytic subunit 1 (Treponema denticola (strain ATCC 35405 / DSM 14222 / CIP 103919 / JCM 8153 / KCTC 15104)).